Consider the following 398-residue polypeptide: Phosphoglycerate kinase (398 aa).

Residues 21 to 23, arginine 36, 59 to 62, arginine 118, and arginine 151 contribute to the substrate site; these read DIN and HFGR. ATP-binding positions include lysine 201, glutamate 323, and 353–356; that span reads GGDT.

This sequence belongs to the phosphoglycerate kinase family. Monomer.

The protein resides in the cytoplasm. The enzyme catalyses (2R)-3-phosphoglycerate + ATP = (2R)-3-phospho-glyceroyl phosphate + ADP. The protein operates within carbohydrate degradation; glycolysis; pyruvate from D-glyceraldehyde 3-phosphate: step 2/5. The chain is Phosphoglycerate kinase from Ruegeria pomeroyi (strain ATCC 700808 / DSM 15171 / DSS-3) (Silicibacter pomeroyi).